A 348-amino-acid polypeptide reads, in one-letter code: Erythronate-4-phosphate dehydrogenase (348 aa).

Residues Thr-46 and Thr-67 each coordinate substrate. Residue Asp-147 participates in NAD(+) binding. The active site involves Arg-209. Position 233 (Asp-233) interacts with NAD(+). The active site involves Glu-238. Catalysis depends on His-255, which acts as the Proton donor. Gly-258 contacts NAD(+). Residue Tyr-259 participates in substrate binding.

Belongs to the D-isomer specific 2-hydroxyacid dehydrogenase family. PdxB subfamily. As to quaternary structure, homodimer.

Its subcellular location is the cytoplasm. It carries out the reaction 4-phospho-D-erythronate + NAD(+) = (R)-3-hydroxy-2-oxo-4-phosphooxybutanoate + NADH + H(+). It participates in cofactor biosynthesis; pyridoxine 5'-phosphate biosynthesis; pyridoxine 5'-phosphate from D-erythrose 4-phosphate: step 2/5. Its function is as follows. Catalyzes the oxidation of erythronate-4-phosphate to 3-hydroxy-2-oxo-4-phosphonooxybutanoate. The sequence is that of Erythronate-4-phosphate dehydrogenase from Bacteroides thetaiotaomicron (strain ATCC 29148 / DSM 2079 / JCM 5827 / CCUG 10774 / NCTC 10582 / VPI-5482 / E50).